A 177-amino-acid polypeptide reads, in one-letter code: Ribosome maturation factor RimM (177 aa).

Residues 100 to 177 form the PRC barrel domain; sequence EDEYYWSDLV…TVLVAWPSDY (78 aa).

This sequence belongs to the RimM family. As to quaternary structure, binds ribosomal protein uS19.

The protein localises to the cytoplasm. An accessory protein needed during the final step in the assembly of 30S ribosomal subunit, possibly for assembly of the head region. Essential for efficient processing of 16S rRNA. May be needed both before and after RbfA during the maturation of 16S rRNA. It has affinity for free ribosomal 30S subunits but not for 70S ribosomes. The sequence is that of Ribosome maturation factor RimM from Psychrobacter arcticus (strain DSM 17307 / VKM B-2377 / 273-4).